Consider the following 144-residue polypeptide: Large ribosomal subunit protein uL11 (144 aa).

The protein belongs to the universal ribosomal protein uL11 family. In terms of assembly, part of the ribosomal stalk of the 50S ribosomal subunit. Interacts with L10 and the large rRNA to form the base of the stalk. L10 forms an elongated spine to which L12 dimers bind in a sequential fashion forming a multimeric L10(L12)X complex. Post-translationally, one or more lysine residues are methylated.

Forms part of the ribosomal stalk which helps the ribosome interact with GTP-bound translation factors. This Neisseria meningitidis serogroup A / serotype 4A (strain DSM 15465 / Z2491) protein is Large ribosomal subunit protein uL11.